A 258-amino-acid chain; its full sequence is Acetylglutamate kinase (258 aa).

Substrate contacts are provided by residues 41–42 (GG), R63, and N156.

The protein belongs to the acetylglutamate kinase family. ArgB subfamily.

The protein localises to the cytoplasm. It catalyses the reaction N-acetyl-L-glutamate + ATP = N-acetyl-L-glutamyl 5-phosphate + ADP. Its pathway is amino-acid biosynthesis; L-arginine biosynthesis; N(2)-acetyl-L-ornithine from L-glutamate: step 2/4. Catalyzes the ATP-dependent phosphorylation of N-acetyl-L-glutamate. This is Acetylglutamate kinase from Bacillus pumilus (strain SAFR-032).